A 252-amino-acid polypeptide reads, in one-letter code: Petrobactin import ATP-binding protein YclP (252 aa).

The ABC transporter domain occupies 2–236 (VEVRNVSKQY…SVLEEIYDMT (235 aa)). 34 to 41 (GPNGAGKS) provides a ligand contact to ATP.

The protein belongs to the ABC transporter superfamily. In terms of assembly, the complex is composed of two ATP-binding proteins (YclP), two transmembrane proteins (YclN and YclO) and a solute-binding protein (YclQ).

It localises to the cell membrane. It carries out the reaction a Fe(III)-siderophore(out) + ATP + H2O = a Fe(III)-siderophore(in) + ADP + phosphate + H(+). In terms of biological role, part of the ABC transporter complex YclNOPQ involved in uptake of ferric-petrobactin. Petrobactin is a photoreactive 3,4-catecholate siderophore produced by many members of the B.cereus group, including B.anthracis. Probably responsible for energy coupling to the transport system. In Bacillus subtilis (strain 168), this protein is Petrobactin import ATP-binding protein YclP (yclP).